Here is a 315-residue protein sequence, read N- to C-terminus: tRNA dimethylallyltransferase (315 aa).

An ATP-binding site is contributed by 13 to 20; it reads GPTAVGKT. Position 15-20 (15-20) interacts with substrate; the sequence is TAVGKT. Residues 38–41 are interaction with substrate tRNA; that stretch reads DSRL.

This sequence belongs to the IPP transferase family. As to quaternary structure, monomer. Mg(2+) is required as a cofactor.

It carries out the reaction adenosine(37) in tRNA + dimethylallyl diphosphate = N(6)-dimethylallyladenosine(37) in tRNA + diphosphate. Functionally, catalyzes the transfer of a dimethylallyl group onto the adenine at position 37 in tRNAs that read codons beginning with uridine, leading to the formation of N6-(dimethylallyl)adenosine (i(6)A). The chain is tRNA dimethylallyltransferase from Herpetosiphon aurantiacus (strain ATCC 23779 / DSM 785 / 114-95).